We begin with the raw amino-acid sequence, 323 residues long: Phospho-N-acetylmuramoyl-pentapeptide-transferase (323 aa).

9 helical membrane passes run 12 to 32, 58 to 78, 84 to 104, 120 to 140, 151 to 171, 177 to 197, 200 to 220, 229 to 250, and 303 to 323; these read IVMA…IIIP, PTIG…VMVG, AMIA…DDLL, MILL…YIGT, INLG…VTNA, GLDG…GIIS, LGHI…LAFL, VFMG…ALIL, and KIVS…FASL.

Belongs to the glycosyltransferase 4 family. MraY subfamily. Mg(2+) serves as cofactor.

The protein resides in the cell membrane. It catalyses the reaction UDP-N-acetyl-alpha-D-muramoyl-L-alanyl-gamma-D-glutamyl-meso-2,6-diaminopimeloyl-D-alanyl-D-alanine + di-trans,octa-cis-undecaprenyl phosphate = di-trans,octa-cis-undecaprenyl diphospho-N-acetyl-alpha-D-muramoyl-L-alanyl-D-glutamyl-meso-2,6-diaminopimeloyl-D-alanyl-D-alanine + UMP. The protein operates within cell wall biogenesis; peptidoglycan biosynthesis. Its function is as follows. Catalyzes the initial step of the lipid cycle reactions in the biosynthesis of the cell wall peptidoglycan: transfers peptidoglycan precursor phospho-MurNAc-pentapeptide from UDP-MurNAc-pentapeptide onto the lipid carrier undecaprenyl phosphate, yielding undecaprenyl-pyrophosphoryl-MurNAc-pentapeptide, known as lipid I. The protein is Phospho-N-acetylmuramoyl-pentapeptide-transferase of Clostridium perfringens (strain SM101 / Type A).